The following is a 271-amino-acid chain: ATP synthase subunit a (271 aa).

5 helical membrane passes run 40-60 (TINIDSMFFSVGLGLLFLVLF), 100-120 (LIAPLALTIFVWVFLMNLMDL), 146-166 (DVNVTLSMALGVFILILFYSI), 220-240 (LIFILIAGLLPWWSQWILNVP), and 242-262 (AIFHILIITLQAFIFMVLTIV).

It belongs to the ATPase A chain family. F-type ATPases have 2 components, CF(1) - the catalytic core - and CF(0) - the membrane proton channel. CF(1) has five subunits: alpha(3), beta(3), gamma(1), delta(1), epsilon(1). CF(0) has three main subunits: a(1), b(2) and c(9-12). The alpha and beta chains form an alternating ring which encloses part of the gamma chain. CF(1) is attached to CF(0) by a central stalk formed by the gamma and epsilon chains, while a peripheral stalk is formed by the delta and b chains.

It localises to the cell inner membrane. In terms of biological role, key component of the proton channel; it plays a direct role in the translocation of protons across the membrane. The sequence is that of ATP synthase subunit a from Shigella dysenteriae serotype 1 (strain Sd197).